The chain runs to 141 residues: MAKKAMAYIKLQIPAGKANPSPPVGPALGQHGVNIMEFCKGFNARTQSMGDTIVPVVITVYQDRSFSFITKTPPAAVLLMKAANITKGSSNPKSERVAEISKEKIREIAEIKMPDLNAYDIDAAMLIIEGTARSAGITVVE.

It belongs to the universal ribosomal protein uL11 family. Part of the ribosomal stalk of the 50S ribosomal subunit. Interacts with L10 and the large rRNA to form the base of the stalk. L10 forms an elongated spine to which L12 dimers bind in a sequential fashion forming a multimeric L10(L12)X complex. One or more lysine residues are methylated.

Functionally, forms part of the ribosomal stalk which helps the ribosome interact with GTP-bound translation factors. The chain is Large ribosomal subunit protein uL11 from Desulfotalea psychrophila (strain LSv54 / DSM 12343).